The following is a 465-amino-acid chain: MSNKMWGGRFGEGPDAIMEEINVSIDVDRHLYAQDIAASKVHAEMLAAQGIIAANDAKKIGKGLDTILSEIRDDSFDFKRALEDIHMNVESRLGELIGPSAGRLHTARSRNDQVATDFRLYVRDIIDETDNALATFQHTLATRALEFAGTVMPGFTHLQTAQPVTFGHHLLAYVEMAARDRGRFADARRRLNESPLGAAALAGTSFPIDRHATAKGLGFDRPMANSLDAVSDRDFVLETLSAAAIASTHLSRFAEEMVIWTSPLVGLVRLSDKFTTGSSIMPQKRNPDAAELVRAKTGRVVGALTGLLVVMKGLPLAYQKDMQEDKQGAMEAFSALSLAIRAMTGMVADLVPDEARMKAAAGDGYATATDLADWLVRTLKMPFRDAHHVTGRIVAAASKQGVALHELPLSAMQAVEPRITRDALAVLSVEASVKSRTSYGGTAPKNVRAQAKAWLRRLEKKRTPD.

Belongs to the lyase 1 family. Argininosuccinate lyase subfamily.

The protein localises to the cytoplasm. The enzyme catalyses 2-(N(omega)-L-arginino)succinate = fumarate + L-arginine. Its pathway is amino-acid biosynthesis; L-arginine biosynthesis; L-arginine from L-ornithine and carbamoyl phosphate: step 3/3. The sequence is that of Argininosuccinate lyase from Nitrobacter winogradskyi (strain ATCC 25391 / DSM 10237 / CIP 104748 / NCIMB 11846 / Nb-255).